The following is a 388-amino-acid chain: Probable proton-coupled zinc antiporter SLC30A3 (388 aa).

A disordered region spans residues M1–L41. The Cytoplasmic segment spans residues M1–Q75. 2 positions are modified to phosphoserine: S63 and S66. Residues L76 to L96 form a helical membrane-spanning segment. The Lumenal segment spans residues A97–D105. The chain crosses the membrane as a helical span at residues A106–S126. Residues H108 and D112 each coordinate Zn(2+). Topologically, residues T127 to G145 are cytoplasmic. The chain crosses the membrane as a helical span at residues A146–L166. Topologically, residues R167–A177 are lumenal. A helical transmembrane segment spans residues G178–L198. Topologically, residues H199–A235 are cytoplasmic. The chain crosses the membrane as a helical span at residues F236–I256. Zn(2+) contacts are provided by H238 and D242. The Lumenal portion of the chain corresponds to Y257 to K263. Residues V264–T284 traverse the membrane as a helical segment. Over L285–A388 the chain is Cytoplasmic.

Belongs to the cation diffusion facilitator (CDF) transporter (TC 2.A.4) family. SLC30A subfamily. Homodimer. Homodimerization is negligible compared to the human protein. It could explain the lower efficiency of zinc transport. Interacts with TMEM163. As to expression, expression is restricted to brain (at protein level). In the brain, most abundant in hippocampus and cerebral cortex. The mRNA is also detected in testis, expression being restricted to germ cells and highest in pachytene spermatocytes and round spermatids.

It localises to the cytoplasmic vesicle. Its subcellular location is the secretory vesicle. The protein localises to the synaptic vesicle membrane. It is found in the synapse. The protein resides in the synaptosome. It localises to the late endosome membrane. Its subcellular location is the lysosome membrane. The enzyme catalyses Zn(2+)(in) + 2 H(+)(out) = Zn(2+)(out) + 2 H(+)(in). Its function is as follows. Probable proton-coupled zinc ion antiporter mediating the import of zinc from cytoplasm into synaptic vesicles and participating to cellular zinc ion homeostasis in the brain. In Mus musculus (Mouse), this protein is Probable proton-coupled zinc antiporter SLC30A3.